Here is a 209-residue protein sequence, read N- to C-terminus: Probable GTP-binding protein EngB (209 aa).

Residues 27-201 form the EngB-type G domain; sequence SGVEIAFAGR…ATKLDSWFAE (175 aa). GTP is bound by residues 35-42, 62-66, 80-83, 147-150, and 180-182; these read GRSNAGKS, GRTQL, DLPG, TKAD, and YSA. Residues S42 and T64 each coordinate Mg(2+).

It belongs to the TRAFAC class TrmE-Era-EngA-EngB-Septin-like GTPase superfamily. EngB GTPase family. Requires Mg(2+) as cofactor.

Necessary for normal cell division and for the maintenance of normal septation. The protein is Probable GTP-binding protein EngB of Glaesserella parasuis serovar 5 (strain SH0165) (Haemophilus parasuis).